Reading from the N-terminus, the 472-residue chain is Chromosomal replication initiator protein DnaA (472 aa).

A domain I, interacts with DnaA modulators region spans residues 1–80; the sequence is MDTKQIWFTT…YQVNVRVIIS (80 aa). The segment at 80-130 is domain II; the sequence is SSATPAPSEPVAVTPSEPSPTTEVAEPSFASFNQAAPMLNQLPLGDPNRSS. The tract at residues 131–347 is domain III, AAA+ region; that stretch reads VLNPRYTFSS…GCLNRVIAYA (217 aa). ATP-binding residues include Gly-175, Gly-177, Lys-178, and Thr-179. Residues 348–472 form a domain IV, binds dsDNA region; sequence NLNRTPVTVE…RQRLYGENAR (125 aa).

This sequence belongs to the DnaA family. In terms of assembly, oligomerizes as a right-handed, spiral filament on DNA at oriC.

The protein localises to the cytoplasm. In terms of biological role, plays an essential role in the initiation and regulation of chromosomal replication. ATP-DnaA binds to the origin of replication (oriC) to initiate formation of the DNA replication initiation complex once per cell cycle. Binds the DnaA box (a 9 base pair repeat at the origin) and separates the double-stranded (ds)DNA. Forms a right-handed helical filament on oriC DNA; dsDNA binds to the exterior of the filament while single-stranded (ss)DNA is stabiized in the filament's interior. The ATP-DnaA-oriC complex binds and stabilizes one strand of the AT-rich DNA unwinding element (DUE), permitting loading of DNA polymerase. After initiation quickly degrades to an ADP-DnaA complex that is not apt for DNA replication. Binds acidic phospholipids. The protein is Chromosomal replication initiator protein DnaA of Herpetosiphon aurantiacus (strain ATCC 23779 / DSM 785 / 114-95).